Consider the following 176-residue polypeptide: Ribosome maturation factor RimM (176 aa).

Residues 104–176 form the PRC barrel domain; sequence EDEYYFYEIL…KIIAKEMEWI (73 aa).

This sequence belongs to the RimM family. In terms of assembly, binds ribosomal protein uS19.

The protein localises to the cytoplasm. Functionally, an accessory protein needed during the final step in the assembly of 30S ribosomal subunit, possibly for assembly of the head region. Essential for efficient processing of 16S rRNA. May be needed both before and after RbfA during the maturation of 16S rRNA. It has affinity for free ribosomal 30S subunits but not for 70S ribosomes. This Thermotoga maritima (strain ATCC 43589 / DSM 3109 / JCM 10099 / NBRC 100826 / MSB8) protein is Ribosome maturation factor RimM.